We begin with the raw amino-acid sequence, 440 residues long: Xaa-Pro dipeptidase (440 aa).

The Mn(2+) site is built by D244, D255, H335, E380, and E419.

This sequence belongs to the peptidase M24B family. Bacterial-type prolidase subfamily. It depends on Mn(2+) as a cofactor.

It catalyses the reaction Xaa-L-Pro dipeptide + H2O = an L-alpha-amino acid + L-proline. Functionally, splits dipeptides with a prolyl residue in the C-terminal position. The sequence is that of Xaa-Pro dipeptidase from Shewanella piezotolerans (strain WP3 / JCM 13877).